Here is a 442-residue protein sequence, read N- to C-terminus: DNA topoisomerase medium subunit (442 aa).

In terms of domain architecture, Topo IIA-type catalytic spans 29-438; sequence IPNMIDGFKP…DVVTEYTKDL (410 aa). Tyr-117 (O-(5'-phospho-DNA)-tyrosine intermediate) is an active-site residue.

It belongs to the type II topoisomerase family. Part of the DNA topoisomerase complex made of gp39, gp52 and gp60. Requires Mg(2+) as cofactor.

It catalyses the reaction ATP-dependent breakage, passage and rejoining of double-stranded DNA.. Its function is as follows. Medium subunit of the DNA topoisomerase that untwists superhelical DNA. Controls topological states of double-stranded DNA by transient breakage and subsequent rejoining of DNA strands. This is DNA topoisomerase medium subunit (52) from Enterobacteria phage T4 (Bacteriophage T4).